A 197-amino-acid polypeptide reads, in one-letter code: Imidazoleglycerol-phosphate dehydratase (197 aa).

The protein belongs to the imidazoleglycerol-phosphate dehydratase family.

It is found in the cytoplasm. The enzyme catalyses D-erythro-1-(imidazol-4-yl)glycerol 3-phosphate = 3-(imidazol-4-yl)-2-oxopropyl phosphate + H2O. Its pathway is amino-acid biosynthesis; L-histidine biosynthesis; L-histidine from 5-phospho-alpha-D-ribose 1-diphosphate: step 6/9. In Pseudomonas fluorescens (strain SBW25), this protein is Imidazoleglycerol-phosphate dehydratase.